Consider the following 377-residue polypeptide: Protein FAM199X-B (377 aa).

Over residues 240–254 (KEHSPRQRCTRESWK) the composition is skewed to basic and acidic residues. Residues 240-350 (KEHSPRQRCT…EQRQARKERI (111 aa)) form a disordered region. The segment covering 256 to 301 (TSYSTASTSGVSGASVSSSSASMVSTASSTGSSGGNSASNSSANMS) has biased composition (low complexity). The segment covering 319–338 (DSKKRSKQRKLQQKALRKRQ) has biased composition (basic residues). Residues 321-349 (KKRSKQRKLQQKALRKRQLKEQRQARKER) are a coiled coil. Basic and acidic residues predominate over residues 339–350 (LKEQRQARKERI).

It belongs to the FAM199 family.

This is Protein FAM199X-B (fam199x-b) from Xenopus laevis (African clawed frog).